The sequence spans 372 residues: 3,5-dihydroxyphenylacetyl-CoA synthase (372 aa).

Residue Cys-160 is part of the active site.

This sequence belongs to the thiolase-like superfamily. Chalcone/stilbene synthases family.

The enzyme catalyses 4 malonyl-CoA + 4 H(+) = (3,5-dihydroxyphenyl)acetyl-CoA + 4 CO2 + 3 CoA + H2O. It functions in the pathway antibiotic biosynthesis. Functionally, involved in the biosynthesis of the nonproteinogenic amino acid monomer (S)-3,5-dihydroxyphenylglycine (Dpg) responsible of the production of balhimycin antibiotic. Catalyzes the Claisen condensation of four molecules of malonyl-CoA to yield 3,5-dihydroxyphenylacetyl-CoA (DPA-CoA) and three free coenzyme A (CoA). DpgA requires the presence of the dehydratases DpgB and DpgD to facilitate the aromatization of the DPA-S-DgpA or DPA-S-CoA intermediate. This Amycolatopsis balhimycina protein is 3,5-dihydroxyphenylacetyl-CoA synthase.